The sequence spans 152 residues: Nucleoside diphosphate kinase (152 aa).

6 residues coordinate ATP: Lys9, Phe57, Arg85, Thr91, Arg102, and Asn112. The Pros-phosphohistidine intermediate role is filled by His115.

It belongs to the NDK family. In terms of assembly, homotetramer. Mg(2+) serves as cofactor.

The protein localises to the cytoplasm. The enzyme catalyses a 2'-deoxyribonucleoside 5'-diphosphate + ATP = a 2'-deoxyribonucleoside 5'-triphosphate + ADP. It carries out the reaction a ribonucleoside 5'-diphosphate + ATP = a ribonucleoside 5'-triphosphate + ADP. Major role in the synthesis of nucleoside triphosphates other than ATP. The ATP gamma phosphate is transferred to the NDP beta phosphate via a ping-pong mechanism, using a phosphorylated active-site intermediate. This chain is Nucleoside diphosphate kinase, found in Rhodopirellula baltica (strain DSM 10527 / NCIMB 13988 / SH1).